Here is a 580-residue protein sequence, read N- to C-terminus: 3-(3-hydroxy-phenyl)propionate/3-hydroxycinnamic acid hydroxylase (580 aa).

Residues 14–43 (DVLVVGAGPVGLTLANILGLQGIRTVVVEE) and 291–301 (FRRGRLLLAGD) contribute to the FAD site.

This sequence belongs to the PheA/TfdB FAD monooxygenase family. Requires FAD as cofactor.

The enzyme catalyses 3-(3-hydroxyphenyl)propanoate + NADH + O2 + H(+) = 3-(2,3-dihydroxyphenyl)propanoate + NAD(+) + H2O. The catalysed reaction is (2E)-3-(3-hydroxyphenyl)prop-2-enoate + NADH + O2 + H(+) = (2E)-3-(2,3-dihydroxyphenyl)prop-2-enoate + NAD(+) + H2O. It functions in the pathway aromatic compound metabolism; 3-phenylpropanoate degradation. Its function is as follows. Catalyzes the insertion of one atom of molecular oxygen into position 2 of the phenyl ring of 3-(3-hydroxyphenyl)propionate (3-HPP) and hydroxycinnamic acid (3HCI). The polypeptide is 3-(3-hydroxy-phenyl)propionate/3-hydroxycinnamic acid hydroxylase (Mycobacterium avium (strain 104)).